Here is a 311-residue protein sequence, read N- to C-terminus: NAD kinase (311 aa).

Catalysis depends on Asp-89, which acts as the Proton acceptor. NAD(+)-binding positions include 89–90, Arg-94, 163–164, Asp-193, and 204–209; these read DG, NE, and TAYAFS.

Belongs to the NAD kinase family. It depends on a divalent metal cation as a cofactor.

Its subcellular location is the cytoplasm. The catalysed reaction is NAD(+) + ATP = ADP + NADP(+) + H(+). In terms of biological role, involved in the regulation of the intracellular balance of NAD and NADP, and is a key enzyme in the biosynthesis of NADP. Catalyzes specifically the phosphorylation on 2'-hydroxyl of the adenosine moiety of NAD to yield NADP. The sequence is that of NAD kinase from Mycobacterium leprae (strain Br4923).